Reading from the N-terminus, the 259-residue chain is Small ribosomal subunit protein eS1 (259 aa).

Positions 1-18 (MAVGKNKRISKGKKGGKK) are enriched in basic residues. The tract at residues 1–22 (MAVGKNKRISKGKKGGKKKASD) is disordered.

This sequence belongs to the eukaryotic ribosomal protein eS1 family. As to quaternary structure, component of the small ribosomal subunit. Mature ribosomes consist of a small (40S) and a large (60S) subunit. The 40S subunit contains about 33 different proteins and 1 molecule of RNA (18S). The 60S subunit contains about 49 different proteins and 3 molecules of RNA (25S, 5.8S and 5S).

The protein localises to the cytoplasm. The protein is Small ribosomal subunit protein eS1 of Chlamydomonas reinhardtii (Chlamydomonas smithii).